Reading from the N-terminus, the 473-residue chain is Reticulon-4 receptor (473 aa).

The signal sequence occupies residues 1-26; sequence MKRASSGGSRLLAWVLWLQAWRVATP. Intrachain disulfides connect Cys-27–Cys-33 and Cys-31–Cys-43. One can recognise an LRRNT domain in the interval 27-57; the sequence is CPGACVCYNEPKVTTSCPQQGLQAVPTGIPA. 8 LRR repeats span residues 58-79, 82-103, 106-128, 131-152, 155-176, 179-200, 203-224, and 227-248; these read SSQR…SFQS, NLTI…AFTG, LLEQ…TFHG, HLHT…LFRG, ALQY…TFRD, NLTH…AFRG, SLDR…AFRD, and RLMT…VLMP. Asn-82 carries N-linked (GlcNAc...) asparagine glycosylation. A glycan (N-linked (GlcNAc...) asparagine) is linked at Asn-179. Residues 260-311 enclose the LRRCT domain; it reads NPWVCDCRARPLWAWLQKFRGSSSEVPCNLPQRLADRDLKRLAASDLEGCAV. Intrachain disulfides connect Cys-264–Cys-287, Cys-266–Cys-335, and Cys-309–Cys-336. Positions 346–446 are disordered; that stretch reads VLEPGRPASA…GASGTGDAEG (101 aa). Asn-372 is a glycosylation site (N-linked (GlcNAc...) asparagine). Positions 413–429 are enriched in basic residues; the sequence is PRRRPGCSRKNRTRSHC. The segment covering 434–445 has biased composition (gly residues); sequence AGSGASGTGDAE. Ser-447 is lipidated: GPI-anchor amidated serine. Positions 448 to 473 are cleaved as a propeptide — removed in mature form; sequence GALPALACSLAPLGLALVLWTVLGPC.

This sequence belongs to the Nogo receptor family. Homodimer. Interacts with MAG. Interacts with RTN4. Interacts with NGFR. Interacts with LINGO1. Interacts with KIAA0319L. Interacts with OLFM1; this inhibits interaction with LINGO1 and NGFR. Interacts with OMG. N-glycosylated. O-glycosylated. Contains terminal sialic acid groups on its glycan chains. In terms of tissue distribution, detected in embryonic hippocampus neurons. Detected in brain (at protein level). Detected in neurons in the neocortex, in hippocampus, dorsal thalamus, cerebellum granule cell layer and the mitral cell layer in the olfactory bulb. Detected in brain, dorsal root ganglion and heart.

Its subcellular location is the cell membrane. The protein localises to the membrane raft. It localises to the cell projection. It is found in the dendrite. The protein resides in the axon. Its subcellular location is the perikaryon. Functionally, receptor for RTN4, OMG and MAG. Functions as a receptor for the sialylated gangliosides GT1b and GM1. Besides, functions as a receptor for chondroitin sulfate proteoglycans. Can also bind heparin. Intracellular signaling cascades are triggered via the coreceptor NGFR. Signaling mediates activation of Rho and downstream reorganization of the actin cytoskeleton. Mediates axonal growth inhibition. Mediates axonal growth inhibition and plays a role in regulating axon regeneration and neuronal plasticity in the adult central nervous system. Plays a role in postnatal brain development. Required for normal axon migration across the brain midline and normal formation of the corpus callosum. Protects motoneurons against apoptosis; protection against apoptosis is probably mediated via interaction with MAG. Acts in conjunction with RTN4 and LINGO1 in regulating neuronal precursor cell motility during cortical development. Like other family members, plays a role in restricting the number dendritic spines and the number of synapses that are formed during brain development. The sequence is that of Reticulon-4 receptor (Rtn4r) from Mus musculus (Mouse).